We begin with the raw amino-acid sequence, 294 residues long: Large ribosomal subunit protein uL18B (294 aa).

Belongs to the universal ribosomal protein uL18 family. As to quaternary structure, component of the large ribosomal subunit (LSU). Mature yeast ribosomes consist of a small (40S) and a large (60S) subunit. The 40S small subunit contains 1 molecule of ribosomal RNA (18S rRNA) and 33 different proteins (encoded by 57 genes). The large 60S subunit contains 3 rRNA molecules (25S, 5.8S and 5S rRNA) and 46 different proteins (encoded by 81 genes). Component of a hexameric 5S RNP precursor complex, composed of 5S RNA, rrs1, rpf2, rpl5a/rpl5b, rpl11a/rpl11b and syo1; this complex acts as a precursor for ribosome assembly. rpl5a/rpl5b/uL18 forms a heterotrimeric complex with syo1 and rpl11a/rpl11b/uL5. Interaction of this complex with KAP104 allows the nuclear import of the heterotrimer.

Its subcellular location is the cytoplasm. It localises to the nucleus. Component of the ribosome, a large ribonucleoprotein complex responsible for the synthesis of proteins in the cell. The small ribosomal subunit (SSU) binds messenger RNAs (mRNAs) and translates the encoded message by selecting cognate aminoacyl-transfer RNA (tRNA) molecules. The large subunit (LSU) contains the ribosomal catalytic site termed the peptidyl transferase center (PTC), which catalyzes the formation of peptide bonds, thereby polymerizing the amino acids delivered by tRNAs into a polypeptide chain. The nascent polypeptides leave the ribosome through a tunnel in the LSU and interact with protein factors that function in enzymatic processing, targeting, and the membrane insertion of nascent chains at the exit of the ribosomal tunnel. The protein is Large ribosomal subunit protein uL18B (rpl502) of Schizosaccharomyces pombe (strain 972 / ATCC 24843) (Fission yeast).